The sequence spans 302 residues: Haloalkane dehalogenase (302 aa).

Residues 48–150 (PVLLMHGEPS…AGLVIANTGL (103 aa)) form the AB hydrolase-1 domain. Asp-123 (nucleophile) is an active-site residue. The active-site Proton donor is the Asp-249. His-278 functions as the Proton acceptor in the catalytic mechanism.

Belongs to the haloalkane dehalogenase family. Type 1 subfamily. Monomer.

It catalyses the reaction 1-haloalkane + H2O = a halide anion + a primary alcohol + H(+). Functionally, catalyzes hydrolytic cleavage of carbon-halogen bonds in halogenated aliphatic compounds, leading to the formation of the corresponding primary alcohols, halide ions and protons. This Caulobacter sp. (strain K31) protein is Haloalkane dehalogenase.